A 417-amino-acid chain; its full sequence is Phosphoglycerate kinase (417 aa).

14 residues coordinate (2R)-3-phosphoglycerate: valine 23, aspartate 24, phenylalanine 25, asparagine 26, glutamine 38, arginine 39, serine 62, histidine 63, glycine 65, arginine 66, leucine 121, arginine 122, histidine 169, and arginine 170. Glycine 213 serves as a coordination point for ADP. Residue glycine 213 coordinates CDP. 2 residues coordinate AMP: alanine 214 and lysine 215. Alanine 214 lines the ATP pocket. Mg(2+) is bound at residue alanine 214. Aspartate 218 serves as a coordination point for CDP. Residue aspartate 218 coordinates Mg(2+). Lysine 219 contributes to the AMP binding site. Position 219 (lysine 219) interacts with ATP. Residue glycine 237 coordinates ADP. Glycine 237 provides a ligand contact to CDP. AMP contacts are provided by glycine 238 and glycine 312. The ATP site is built by glycine 238 and glycine 312. Glycine 337 and phenylalanine 342 together coordinate CDP. Phenylalanine 342 is a binding site for ADP. Glutamate 343 lines the AMP pocket. ATP is bound by residues glutamate 343, aspartate 374, and threonine 375. Aspartate 374 is a Mg(2+) binding site.

The protein belongs to the phosphoglycerate kinase family. In terms of assembly, monomer. Mg(2+) serves as cofactor.

It is found in the cytoplasm. Its subcellular location is the mitochondrion. The enzyme catalyses (2R)-3-phosphoglycerate + ATP = (2R)-3-phospho-glyceroyl phosphate + ADP. It participates in carbohydrate degradation; glycolysis; pyruvate from D-glyceraldehyde 3-phosphate: step 2/5. Its function is as follows. Catalyzes one of the two ATP producing reactions in the glycolytic pathway via the reversible conversion of 1,3-diphosphoglycerate to 3-phosphoglycerate. Both L- and D- forms of purine and pyrimidine nucleotides can be used as substrates, but the activity is much lower on pyrimidines. Negatively regulates the biosynthesis of acetyl-CoA from pyruvate in the mitochondrion. This is Phosphoglycerate kinase (PGK1) from Yarrowia lipolytica (strain CLIB 122 / E 150) (Yeast).